The primary structure comprises 1529 residues: MAFAGVGQGLGTYDRTEQTSGASLGRVASRAHFTDTHPSDDLPAQTEEHRAREVGHLARQLTRQSVGGTDDSSALFSYQQGSDLDPFSDKFCARRWTKLMFEALQTSGPARKAGLSFRNLDVHGFGSDADYQKTVGNLPLVGIGALRDLISNRKRKVQILNSMDGVLEAGEMLVVLGPPGSGCTTMLKTIAGEMNGIYLDESSSLNYRGITPKQIYGQFRGEAIYTAEVDVHFPNLTVGQTLSFAAEARAPRNPPGGISKKEYAKHMRDVVMSVFGISHTLNTIVGNDFIRGVSGGERKRVTIAEASLAGAPLQCWDNSTRGLDSANAIEFCKNLRLNADYIGISSAVAIYQAPQAAYDCFDKVSVLYEGEQIFFGKTTDAKQFFVDMGFHCPSQQTVPDFLTSLTSASERTPREGFEGKVPTTPQEFAARWKQSDKYQELLAQIAEFENKYPVHGKNYQEFLQSRRAQQSKRLRAKSPYTLSYGGQVELCLRRGFDRLRADPSLTLTQLFGNFIMALIIGSVFYNLPATTSSFYSRGALLFFAILMSAFGSALEILILYAQRGIVEKHSRYAFYHPSAEAVASALTDIPYKVINCIIFSLTLYFMTNLRREPGPYFFFMLISFTLTMVMSMLFRSIASLSRSLAQALAPAALLILGLVMYTGFAVNVANMRGWARWMNWLDPIAYGFESLMINEFHDREYECSAFIPMGPGYEGATGQQHVCSTAGAIAGSSVVNGDDYINLSYEYYHAHKWRNFGILIGFFLFFTAIYMTATEFITAKKSKGEILVFPRGKIPRALLAQSTHSHGSSDDVEGGKFAGGSKMKKQITGADRADAGIIQRQTAIFSWKDVVYDIKIKKEPRRILDHVDGWVKPGTLTALMGVSGAGKTTLLDVLATRVTMGVVTGEMLVDGRQRDVSFQRKTGYVQQQDLHLETSTVREALRFSAVLRQSNTISIKEKYEYVEEVLKLLEMESYADAVVGVPGTGLNVEQRKRLTIGVELVAKPALLLFLDEPTSGLDSQTSWNILLLLRKLTEHGQAILCTIHQPSAMLFEQFDRLLFLARGGKTVYFGEVGKGSHILIDYFEKNGAPKCPEGENPAEWMLAAIGAAPGSHSDVDWHQAWINSPERVEVRRELARIKETQGGKGEAALQNKDHEKSKSEVKAEYAEFASPLWKQFNVVLTRVWQQHWRTPSYIWSKAALCALSALFIGFSFFKSGTSQQGLQNQLFSVFMMFTIFGQLTQQIMPNFTTQRSLYEVRERPSKTYSWKIFILSNIVAEIPWAILMGAVIYFTWYYPIGYYRNAIPTGAVHLRGALMFLYIEMFLIFNATFAIMIVAGIATAETAGNIANLLFSMCLIFCGVLAPPSSLPGFWMFMYRVSPFTYLVDGMLSTAVAETSVVCSDIELLTLNPPSGESCGDYMSTYISNYGGYLVNENATTACEFCSMSSTNSFLAQFNIYYSNKWRDFGLLWAYVVFNIIAAVGIYWLARVPKNTGKEQASEPEGVQEKLVPAQSSEKKRESVSRGSESTAA.

Positions 1–10 (MAFAGVGQGL) are enriched in gly residues. The disordered stretch occupies residues 1–21 (MAFAGVGQGLGTYDRTEQTSG). An ABC transporter 1 domain is found at 144–394 (GALRDLISNR…FVDMGFHCPS (251 aa)). N-linked (GlcNAc...) asparagine glycans are attached at residues Asn235 and Asn318. Helical transmembrane passes span 505-525 (LTLTQLFGNFIMALIIGSVFY), 539-559 (ALLFFAILMSAFGSALEILIL), 589-609 (IPYKVINCIIFSLTLYFMTNL), 614-634 (GPYFFFMLISFTLTMVMSMLF), and 648-668 (LAPAALLILGLVMYTGFAVNV). Asn742 carries N-linked (GlcNAc...) asparagine glycosylation. A helical transmembrane segment spans residues 757 to 777 (GILIGFFLFFTAIYMTATEFI). In terms of domain architecture, ABC transporter 2 spans 845–1087 (FSWKDVVYDI…ILIDYFEKNG (243 aa)). 881–888 (GVSGAGKT) contributes to the ATP binding site. The next 5 helical transmembrane spans lie at 1193 to 1213 (YIWSKAALCALSALFIGFSFF), 1227 to 1247 (FSVFMMFTIFGQLTQQIMPNF), 1268 to 1288 (IFILSNIVAEIPWAILMGAVI), 1314 to 1334 (LMFLYIEMFLIFNATFAIMIV), and 1353 to 1373 (MCLIFCGVLAPPSSLPGFWMF). An N-linked (GlcNAc...) asparagine glycan is attached at Asn1434. Residues 1465–1485 (FGLLWAYVVFNIIAAVGIYWL) form a helical membrane-spanning segment. The segment at 1493–1529 (GKEQASEPEGVQEKLVPAQSSEKKRESVSRGSESTAA) is disordered.

This sequence belongs to the ABC transporter superfamily. ABCG family. PDR (TC 3.A.1.205) subfamily.

The protein resides in the cell membrane. It catalyses the reaction itraconazole(in) + ATP + H2O = itraconazole(out) + ADP + phosphate + H(+). The catalysed reaction is voriconazole(in) + ATP + H2O = voriconazole(out) + ADP + phosphate + H(+). The enzyme catalyses fluconazole(in) + ATP + H2O = fluconazole(out) + ADP + phosphate + H(+). In terms of biological role, pleiotropic ABC efflux transporter that confers resistance to structurally and functionally unrelated compounds including azoles such as fluconazole (FLC), itraconazole (ITC), posaconazole (POS), and voriconazole (VRC). The protein is ABC multidrug transporter AFR2 of Cryptococcus neoformans var. grubii serotype A (strain H99 / ATCC 208821 / CBS 10515 / FGSC 9487) (Filobasidiella neoformans var. grubii).